We begin with the raw amino-acid sequence, 244 residues long: Leucyl/phenylalanyl-tRNA--protein transferase (244 aa).

This sequence belongs to the L/F-transferase family.

It is found in the cytoplasm. The catalysed reaction is N-terminal L-lysyl-[protein] + L-leucyl-tRNA(Leu) = N-terminal L-leucyl-L-lysyl-[protein] + tRNA(Leu) + H(+). It carries out the reaction N-terminal L-arginyl-[protein] + L-leucyl-tRNA(Leu) = N-terminal L-leucyl-L-arginyl-[protein] + tRNA(Leu) + H(+). It catalyses the reaction L-phenylalanyl-tRNA(Phe) + an N-terminal L-alpha-aminoacyl-[protein] = an N-terminal L-phenylalanyl-L-alpha-aminoacyl-[protein] + tRNA(Phe). Functionally, functions in the N-end rule pathway of protein degradation where it conjugates Leu, Phe and, less efficiently, Met from aminoacyl-tRNAs to the N-termini of proteins containing an N-terminal arginine or lysine. This is Leucyl/phenylalanyl-tRNA--protein transferase from Janthinobacterium sp. (strain Marseille) (Minibacterium massiliensis).